Reading from the N-terminus, the 146-residue chain is MKYVHVGVNVVSLEKSINFYEKVFGVKAVKVKTDYAKFLLETPGLNFTLNVADEVKGNQVNHFGFQVDSLEEVLKHKKRLEKEGFFAREEMDTTCCYAVQDKFWITDPDGNEWEFFYTKSNSEVQKQDSSSCCVTPPSDITTNSCC.

The VOC domain maps to 2–118 (KYVHVGVNVV…DGNEWEFFYT (117 aa)). The Fe(2+) site is built by histidine 5 and histidine 62. 2 residues coordinate roxarsone (III): cysteine 95 and cysteine 96. Glutamate 114 contributes to the Fe(2+) binding site.

This sequence to M.tuberculosis Rv2641. Fe(2+) serves as cofactor.

It carries out the reaction methylarsonous acid + AH2 + O2 = arsenite + methanol + A + H(+). The enzyme catalyses roxarsone (III) + AH2 + O2 = 4-hydroxy-3-nitrocyclohexa-2,5-dien-1-one + arsenite + A + H(+). It catalyses the reaction nitarsone (III) + AH2 + O2 = 4-nitrocyclohexa-2,5-dien-1-one + arsenite + A + H(+). The catalysed reaction is 4-aminophenylarsonous acid + AH2 + O2 = 4-aminocyclohexa-2,5-dien-1-one + arsenite + A. Its function is as follows. Nonheme iron-dependent dioxygenase that can break carbon-arsenic bonds, playing a role in the detoxification of environmental organoarsenical compounds. Catalyzes the oxygen-dependent demethylation of highly toxic methylarsonous acid (MAs(III)) to arsenite, which can then be exported out of the cell. Can also cleave the C-As bond in several trivalent aromatic arsenicals, including roxarsone (III), nitarsone (III) and (4-aminophenyl)arsonous acid. Organoarsenical degradation by this enzyme is proposed to have a significant impact on the arsenic biogeocycle that maintains a balance between organic and inorganic species. The chain is Probable trivalent organoarsenical cleaving enzyme (yqcK) from Bacillus subtilis (strain 168).